A 138-amino-acid chain; its full sequence is Thyrotropin subunit beta (138 aa).

The N-terminal stretch at 1–20 (MTAIFLMSMVFGLACGQTMS) is a signal peptide. Intrachain disulfides connect Cys22–Cys72, Cys36–Cys87, Cys39–Cys125, Cys47–Cys103, Cys51–Cys105, and Cys108–Cys115. A glycan (N-linked (GlcNAc...) asparagine) is linked at Asn43. Positions 133-138 (VVEFSI) are excised as a propeptide.

This sequence belongs to the glycoprotein hormones subunit beta family. Heterodimer of a common alpha chain and a unique beta chain which confers biological specificity to thyrotropin, lutropin, follitropin and gonadotropin.

Its subcellular location is the secreted. Functionally, indispensable for the control of thyroid structure and metabolism. This is Thyrotropin subunit beta (TSHB) from Equus caballus (Horse).